The following is a 299-amino-acid chain: MATH domain and coiled-coil domain-containing protein At2g42460 (299 aa).

Positions 7–130 constitute an MATH domain; it reads QKTFTWKIEN…NNTLFIEVYI (124 aa). Residues 225–262 are a coiled coil; sequence FRVKWLKSKLDEISLARKKKVDADAARVQELEGKVKNQ.

The sequence is that of MATH domain and coiled-coil domain-containing protein At2g42460 from Arabidopsis thaliana (Mouse-ear cress).